The sequence spans 682 residues: Beta-galactosidase (682 aa).

The N-terminal stretch at 1-23 (MPGFLVRILPLLLPLLLLGPTRG) is a signal peptide. A propeptide spanning residues 24-28 (LRNAT) is cleaved from the precursor. N-linked (GlcNAc...) asparagine glycosylation occurs at Asn-26. Substrate is bound by residues Tyr-83, Glu-129, and Asn-187. Glu-188 acts as the Proton donor in catalysis. Cys-195 and Cys-230 are disulfide-bonded. An N-linked (GlcNAc...) asparagine glycan is attached at Asn-247. Glu-268 (nucleophile) is an active-site residue. Position 333 (Tyr-333) interacts with substrate. Residues Asn-464, Asn-498, Asn-545, and Asn-555 are each glycosylated (N-linked (GlcNAc...) asparagine). Cys-626 and Cys-634 are joined by a disulfide.

The protein belongs to the glycosyl hydrolase 35 family. Homodimer. May form higher multimers.

The protein localises to the lysosome. The enzyme catalyses Hydrolysis of terminal non-reducing beta-D-galactose residues in beta-D-galactosides.. In terms of biological role, cleaves beta-linked terminal galactosyl residues from gangliosides, glycoproteins, and glycosaminoglycans. The polypeptide is Beta-galactosidase (GLB1) (Macaca fascicularis (Crab-eating macaque)).